The following is a 1248-amino-acid chain: ATP-dependent helicase/nuclease subunit A (1248 aa).

A UvrD-like helicase ATP-binding domain is found at 4 to 480 (TKWTKEQYAA…ILLFKNFRSR (477 aa)). Residue 25-32 (AAAGAGKT) participates in ATP binding. The UvrD-like helicase C-terminal domain maps to 523–820 (ETVVGGAIEL…RLMSIHKSKG (298 aa)).

Belongs to the helicase family. AddA subfamily. In terms of assembly, heterodimer of AddA and AddB/RexB. Requires Mg(2+) as cofactor.

It catalyses the reaction Couples ATP hydrolysis with the unwinding of duplex DNA by translocating in the 3'-5' direction.. The catalysed reaction is ATP + H2O = ADP + phosphate + H(+). Its function is as follows. The heterodimer acts as both an ATP-dependent DNA helicase and an ATP-dependent, dual-direction single-stranded exonuclease. Recognizes the chi site generating a DNA molecule suitable for the initiation of homologous recombination. The AddA nuclease domain is required for chi fragment generation; this subunit has the helicase and 3' -&gt; 5' nuclease activities. This is ATP-dependent helicase/nuclease subunit A from Ruminiclostridium cellulolyticum (strain ATCC 35319 / DSM 5812 / JCM 6584 / H10) (Clostridium cellulolyticum).